A 225-amino-acid chain; its full sequence is 7-cyano-7-deazaguanine synthase (225 aa).

10–20 (FSGGQDSTTLA) contributes to the ATP binding site. Positions 190, 205, 208, and 211 each coordinate Zn(2+).

The protein belongs to the QueC family. Requires Zn(2+) as cofactor.

It carries out the reaction 7-carboxy-7-deazaguanine + NH4(+) + ATP = 7-cyano-7-deazaguanine + ADP + phosphate + H2O + H(+). It participates in purine metabolism; 7-cyano-7-deazaguanine biosynthesis. Its function is as follows. Catalyzes the ATP-dependent conversion of 7-carboxy-7-deazaguanine (CDG) to 7-cyano-7-deazaguanine (preQ(0)). The protein is 7-cyano-7-deazaguanine synthase of Helicobacter acinonychis (strain Sheeba).